The following is a 164-amino-acid chain: ATP synthase subunit b 2 (164 aa).

A helical membrane pass occupies residues 4 to 24 (TFWAFVGLVLFLALLAYFKVP).

It belongs to the ATPase B chain family. In terms of assembly, F-type ATPases have 2 components, F(1) - the catalytic core - and F(0) - the membrane proton channel. F(1) has five subunits: alpha(3), beta(3), gamma(1), delta(1), epsilon(1). F(0) has three main subunits: a(1), b(2) and c(10-14). The alpha and beta chains form an alternating ring which encloses part of the gamma chain. F(1) is attached to F(0) by a central stalk formed by the gamma and epsilon chains, while a peripheral stalk is formed by the delta and b chains.

It is found in the cell inner membrane. Its function is as follows. F(1)F(0) ATP synthase produces ATP from ADP in the presence of a proton or sodium gradient. F-type ATPases consist of two structural domains, F(1) containing the extramembraneous catalytic core and F(0) containing the membrane proton channel, linked together by a central stalk and a peripheral stalk. During catalysis, ATP synthesis in the catalytic domain of F(1) is coupled via a rotary mechanism of the central stalk subunits to proton translocation. Functionally, component of the F(0) channel, it forms part of the peripheral stalk, linking F(1) to F(0). This is ATP synthase subunit b 2 from Bartonella quintana (strain Toulouse) (Rochalimaea quintana).